The following is a 271-amino-acid chain: ATP synthase subunit a (271 aa).

5 consecutive transmembrane segments (helical) span residues 31–51, 89–109, 124–144, 186–206, and 216–236; these read WDTILTSVIAGVIVVGLGLYM, FVAPMAVTLFVYILLCNWIGV, DINLTLTLALVVIVPMHIVSL, IFSGAIMVSLLALMPPYVLWL, and LGVGVIQAFIFALLTILYYAF. The disordered stretch occupies residues 247 to 271; it reads DEHADGGDSSSRQASPTPLPAGQVR.

Belongs to the ATPase A chain family. In terms of assembly, F-type ATPases have 2 components, CF(1) - the catalytic core - and CF(0) - the membrane proton channel. CF(1) has five subunits: alpha(3), beta(3), gamma(1), delta(1), epsilon(1). CF(0) has three main subunits: a(1), b(2) and c(9-12). The alpha and beta chains form an alternating ring which encloses part of the gamma chain. CF(1) is attached to CF(0) by a central stalk formed by the gamma and epsilon chains, while a peripheral stalk is formed by the delta and b chains.

It localises to the cell membrane. Its function is as follows. Key component of the proton channel; it plays a direct role in the translocation of protons across the membrane. In Acidothermus cellulolyticus (strain ATCC 43068 / DSM 8971 / 11B), this protein is ATP synthase subunit a.